The chain runs to 161 residues: RNA pyrophosphohydrolase (161 aa).

The 143-residue stretch at 12 to 154 (PYRPGVGMMI…KRKLYQAVVK (143 aa)) folds into the Nudix hydrolase domain. The Nudix box motif lies at 46–67 (GGIVPGETPSIAAMREMLEEIG).

Belongs to the Nudix hydrolase family. RppH subfamily. It depends on a divalent metal cation as a cofactor.

Functionally, accelerates the degradation of transcripts by removing pyrophosphate from the 5'-end of triphosphorylated RNA, leading to a more labile monophosphorylated state that can stimulate subsequent ribonuclease cleavage. The protein is RNA pyrophosphohydrolase of Rickettsia bellii (strain OSU 85-389).